The primary structure comprises 677 residues: UPF0313 protein RPA0679 (677 aa).

One can recognise a Radical SAM core domain in the interval 335 to 601; the sequence is AWDMIKTSVT…VEAIKGLRQR (267 aa). [4Fe-4S] cluster contacts are provided by Cys-349, Cys-353, and Cys-356. A disordered region spans residues 635-677; the sequence is RPDQLVPAHQPPGTGKAAGTRRPVRGDGPKPQRFTTKGVRLVK.

The protein belongs to the UPF0313 family. Requires [4Fe-4S] cluster as cofactor.

The polypeptide is UPF0313 protein RPA0679 (Rhodopseudomonas palustris (strain ATCC BAA-98 / CGA009)).